The sequence spans 79 residues: U-actitoxin-Avd8b (79 aa).

The first 19 residues, 1–19 (MKSLVIVFVVLLGVAMISA), serve as a signal peptide directing secretion. Positions 20 to 36 (NEEELLAILQDQRNDAR) are excised as a propeptide.

The protein belongs to the sea anemone 8 toxin family.

The protein localises to the secreted. The protein resides in the nematocyst. This is U-actitoxin-Avd8b from Anemonia viridis (Snakelocks anemone).